A 182-amino-acid chain; its full sequence is NADH-quinone oxidoreductase subunit B (182 aa).

Residues C47, C48, C113, and C142 each contribute to the [4Fe-4S] cluster site.

Belongs to the complex I 20 kDa subunit family. In terms of assembly, NDH-1 is composed of 14 different subunits. Subunits NuoB, C, D, E, F, and G constitute the peripheral sector of the complex. The cofactor is [4Fe-4S] cluster.

Its subcellular location is the cell inner membrane. It carries out the reaction a quinone + NADH + 5 H(+)(in) = a quinol + NAD(+) + 4 H(+)(out). Its function is as follows. NDH-1 shuttles electrons from NADH, via FMN and iron-sulfur (Fe-S) centers, to quinones in the respiratory chain. The immediate electron acceptor for the enzyme in this species is believed to be ubiquinone. Couples the redox reaction to proton translocation (for every two electrons transferred, four hydrogen ions are translocated across the cytoplasmic membrane), and thus conserves the redox energy in a proton gradient. This chain is NADH-quinone oxidoreductase subunit B, found in Anaeromyxobacter dehalogenans (strain 2CP-1 / ATCC BAA-258).